The chain runs to 388 residues: Na(+)/H(+) antiporter NhaA (388 aa).

Helical transmembrane passes span 13 to 33 (AAGGIILIVAAIIALIMANTP), 36 to 56 (GIYHAFLNLPVMVKVSSLEIA), 59 to 79 (LLLWINDGLMAIFFLVVGLEV), 95 to 115 (VFPAIAALGGMLAPALIYLMF), 125 to 145 (GWAIPAATDIAFALGVMALLG), 154 to 174 (VFLLALAIIDDLGVIVIIALF), 179 to 199 (VSMAALGVAAASIAVLAFMNW), 213 to 233 (LVLWVAILKSGVHATLAGVII), 259 to 279 (VAFLILPLFAFANAGVSLQGV), 287 to 307 (LLPVGIAAGLFIGKPLGIFTF), 328 to 348 (VFAVSVLCGIGFTMSIFIASL), and 363 to 383 (LGILIGSTTAAVVGYGLLRMS).

It belongs to the NhaA Na(+)/H(+) (TC 2.A.33) antiporter family.

The protein resides in the cell inner membrane. It carries out the reaction Na(+)(in) + 2 H(+)(out) = Na(+)(out) + 2 H(+)(in). Functionally, na(+)/H(+) antiporter that extrudes sodium in exchange for external protons. This chain is Na(+)/H(+) antiporter NhaA, found in Serratia proteamaculans (strain 568).